An 880-amino-acid polypeptide reads, in one-letter code: Guanine nucleotide-binding protein subunit beta 2 (880 aa).

Ser24 bears the Phosphoserine mark. 3 Kelch repeats span residues 291 to 339 (NIYI…MVNN), 377 to 425 (HIFF…KIDI), and 501 to 552 (TVII…LTPS). Residues 624–649 (FNSGSAAQESPKAGASASSASAASFD) form a disordered region. Residues 638-647 (ASASSASAAS) show a composition bias toward low complexity. Residues 691–738 (TVVLHGGSNGLNVLDDMWLMDLECETWTPIETFAKADSSEDGDEKLDS) form a Kelch 4 repeat.

G proteins are composed of 3 units, alpha, beta and gamma. GPB1 interacts with the alpha subunit GPA2.

The protein localises to the cytoplasm. The protein resides in the mitochondrion. Functionally, beta subunit of a guanine nucleotide-binding protein (G protein). G proteins are involved as modulators or transducers in various transmembrane signaling systems. The beta and gamma chains are required for the GTPase activity, for replacement of GDP by GTP, and for G protein-effector interaction. Involved in the determination of the cAMP level according to nutritional conditions, most probably as a regulator of cAMP phosphodiesterase. Required for the control of pseudohyphal and haploid invasive growth. The polypeptide is Guanine nucleotide-binding protein subunit beta 2 (GPB2) (Saccharomyces cerevisiae (strain ATCC 204508 / S288c) (Baker's yeast)).